A 128-amino-acid chain; its full sequence is UPF0325 protein YaeH (128 aa).

This sequence belongs to the UPF0325 family.

The polypeptide is UPF0325 protein YaeH (Salmonella agona (strain SL483)).